A 44-amino-acid polypeptide reads, in one-letter code: Photosystem I reaction center subunit IX (44 aa).

The helical transmembrane segment at 7 to 27 (YLSVAPVLSTLSLGFFAGFLI) threads the bilayer.

The protein belongs to the PsaJ family.

Its subcellular location is the plastid membrane. In terms of biological role, may help in the organization of the PsaE and PsaF subunits. The polypeptide is Photosystem I reaction center subunit IX (Cuscuta obtusiflora (Peruvian dodder)).